A 206-amino-acid chain; its full sequence is Ras-related protein Ral-A (206 aa).

21–28 (GSGGVGKS) is a binding site for GTP. An Effector region motif is present at residues 43–51 (YEPTKADSY). Residues 68–72 (DTAGQ) and 127–130 (NKSD) contribute to the GTP site. Position 194 is a phosphoserine (Ser-194). Residue Cys-203 is modified to Cysteine methyl ester. Cys-203 is lipidated: S-geranylgeranyl cysteine. Residues 204–206 (CIL) constitute a propeptide, removed in mature form.

The protein belongs to the small GTPase superfamily. Ras family. As to quaternary structure, interacts (via effector domain) with RALBP1; during mitosis, recruits RALBP1 to the mitochondrion where it promotes DNM1L phosphorylation and mitochondrial fission. Interacts with EXOC2/Sec5 and EXOC8/Exo84; binding to EXOC2 and EXOC8 is mutually exclusive. Interacts with Clostridium exoenzyme C3. Interacts with RALGPS1. Interacts with LPAR1 and LPAR2. Interacts with GRK2 in response to LPAR1 activation. RALA and GRK2 binding to LPAR1 is mutually exclusive. Interacts with CDC42. Prenylation is essential for membrane localization. Post-translationally, phosphorylated. Phosphorylation at Ser-194 by AURKA/Aurora kinase A, during mitosis, induces RALA localization to the mitochondrion where it regulates mitochondrial fission.

Its subcellular location is the cell membrane. The protein localises to the cleavage furrow. It is found in the midbody. It localises to the midbody ring. The protein resides in the mitochondrion. It carries out the reaction GTP + H2O = GDP + phosphate + H(+). Its activity is regulated as follows. Alternates between an inactive form bound to GDP and an active form bound to GTP. Activated by a guanine nucleotide-exchange factor (GEF) and inactivated by a GTPase-activating protein (GAP). Multifunctional GTPase involved in a variety of cellular processes including gene expression, cell migration, cell proliferation, oncogenic transformation and membrane trafficking. Accomplishes its multiple functions by interacting with distinct downstream effectors. Acts as a GTP sensor for GTP-dependent exocytosis of dense core vesicles. Key regulator of LPAR1 signaling and competes with GRK2 for binding to LPAR1 thus affecting the signaling properties of the receptor. Required for anchorage-independent proliferation of transformed cells. The RALA-exocyst complex regulates integrin-dependent membrane raft exocytosis and growth signaling. During mitosis, supports the stabilization and elongation of the intracellular bridge between dividing cells. Cooperates with EXOC2 to recruit other components of the exocyst to the early midbody. During mitosis, also controls mitochondrial fission by recruiting to the mitochondrion RALBP1, which mediates the phosphorylation and activation of DNM1L by the mitotic kinase cyclin B-CDK1. The chain is Ras-related protein Ral-A (Rala) from Mus musculus (Mouse).